Reading from the N-terminus, the 258-residue chain is UPF0246 protein VP0504 (258 aa).

This sequence belongs to the UPF0246 family.

The sequence is that of UPF0246 protein VP0504 from Vibrio parahaemolyticus serotype O3:K6 (strain RIMD 2210633).